The chain runs to 282 residues: Bifunctional protein FolD (282 aa).

NADP(+) contacts are provided by residues 164 to 166 (GRS) and Ser-189.

This sequence belongs to the tetrahydrofolate dehydrogenase/cyclohydrolase family. As to quaternary structure, homodimer.

It carries out the reaction (6R)-5,10-methylene-5,6,7,8-tetrahydrofolate + NADP(+) = (6R)-5,10-methenyltetrahydrofolate + NADPH. The catalysed reaction is (6R)-5,10-methenyltetrahydrofolate + H2O = (6R)-10-formyltetrahydrofolate + H(+). The protein operates within one-carbon metabolism; tetrahydrofolate interconversion. Catalyzes the oxidation of 5,10-methylenetetrahydrofolate to 5,10-methenyltetrahydrofolate and then the hydrolysis of 5,10-methenyltetrahydrofolate to 10-formyltetrahydrofolate. This chain is Bifunctional protein FolD, found in Anaeromyxobacter dehalogenans (strain 2CP-C).